Reading from the N-terminus, the 800-residue chain is Phenylalanine--tRNA ligase beta subunit (800 aa).

The 116-residue stretch at Thr39 to Leu154 folds into the tRNA-binding domain. The region spanning Ala408 to Ser483 is the B5 domain. Residues Asp461, Asp467, Glu470, and Glu471 each coordinate Mg(2+). An FDX-ACB domain is found at Pro708–Arg800.

It belongs to the phenylalanyl-tRNA synthetase beta subunit family. Type 1 subfamily. In terms of assembly, tetramer of two alpha and two beta subunits. Mg(2+) serves as cofactor.

Its subcellular location is the cytoplasm. It carries out the reaction tRNA(Phe) + L-phenylalanine + ATP = L-phenylalanyl-tRNA(Phe) + AMP + diphosphate + H(+). This is Phenylalanine--tRNA ligase beta subunit from Staphylococcus aureus (strain MSSA476).